The following is a 972-amino-acid chain: mRNA transport regulator MTR10 (972 aa).

It is found in the nucleus. Involved in mRNA transport from nucleus to cytoplasm. The polypeptide is mRNA transport regulator MTR10 (MTR10) (Saccharomyces cerevisiae (strain ATCC 204508 / S288c) (Baker's yeast)).